A 195-amino-acid polypeptide reads, in one-letter code: Putative archaetidylserine decarboxylase proenzyme (195 aa).

Residue serine 159 is the Schiff-base intermediate with substrate; via pyruvic acid of the active site. Serine 159 is modified (pyruvic acid (Ser); by autocatalysis).

The protein belongs to the phosphatidylserine decarboxylase family. PSD-A subfamily. Heterodimer of a large membrane-associated beta subunit and a small pyruvoyl-containing alpha subunit. Pyruvate serves as cofactor. In terms of processing, is synthesized initially as an inactive proenzyme. Formation of the active enzyme involves a self-maturation process in which the active site pyruvoyl group is generated from an internal serine residue via an autocatalytic post-translational modification. Two non-identical subunits are generated from the proenzyme in this reaction, and the pyruvate is formed at the N-terminus of the alpha chain, which is derived from the carboxyl end of the proenzyme. The autoendoproteolytic cleavage occurs by a canonical serine protease mechanism, in which the side chain hydroxyl group of the serine supplies its oxygen atom to form the C-terminus of the beta chain, while the remainder of the serine residue undergoes an oxidative deamination to produce ammonia and the pyruvoyl prosthetic group on the alpha chain. During this reaction, the Ser that is part of the protease active site of the proenzyme becomes the pyruvoyl prosthetic group, which constitutes an essential element of the active site of the mature decarboxylase. Is synthesized initially as an inactive proenzyme. Formation of the active enzyme involves a self-maturation process in which the active site pyruvoyl group is generated from an internal serine residue via an autocatalytic post-translational modification. Two non-identical subunits are generated from the proenzyme in this reaction, and the pyruvate is formed at the N-terminus of the alpha chain, which is derived from the carboxyl end of the proenzyme. The post-translation cleavage follows an unusual pathway, termed non-hydrolytic serinolysis, in which the side chain hydroxyl group of the serine supplies its oxygen atom to form the C-terminus of the beta chain, while the remainder of the serine residue undergoes an oxidative deamination to produce ammonia and the pyruvoyl prosthetic group on the alpha chain.

Its subcellular location is the cell membrane. It carries out the reaction archaetidylserine + H(+) = archaetidylethanolamine + CO2. In terms of biological role, catalyzes the formation of archaetidylethanolamine (PtdEtn) from archaetidylserine (PtdSer). The protein is Putative archaetidylserine decarboxylase proenzyme of Archaeoglobus fulgidus (strain ATCC 49558 / DSM 4304 / JCM 9628 / NBRC 100126 / VC-16).